Reading from the N-terminus, the 247-residue chain is Triosephosphate isomerase (247 aa).

Substrate-binding residues include N10 and K12. H94 (electrophile) is an active-site residue. E164 (proton acceptor) is an active-site residue.

Belongs to the triosephosphate isomerase family. In terms of assembly, homodimer.

It catalyses the reaction D-glyceraldehyde 3-phosphate = dihydroxyacetone phosphate. It participates in carbohydrate biosynthesis; gluconeogenesis. The protein operates within carbohydrate degradation; glycolysis; D-glyceraldehyde 3-phosphate from glycerone phosphate: step 1/1. The protein is Triosephosphate isomerase (Tpi) of Drosophila melanogaster (Fruit fly).